The following is a 213-amino-acid chain: Small ribosomal subunit protein uS3 (213 aa).

The KH type-2 domain occupies 38 to 106 (IREYLENRLS…RVHINIVEIK (69 aa)).

Belongs to the universal ribosomal protein uS3 family. As to quaternary structure, part of the 30S ribosomal subunit. Forms a tight complex with proteins S10 and S14.

Functionally, binds the lower part of the 30S subunit head. Binds mRNA in the 70S ribosome, positioning it for translation. The polypeptide is Small ribosomal subunit protein uS3 (Oceanobacillus iheyensis (strain DSM 14371 / CIP 107618 / JCM 11309 / KCTC 3954 / HTE831)).